A 400-amino-acid chain; its full sequence is Mannitol-1-phosphate 5-dehydrogenase (400 aa).

12–23 (AVHFGAGNIGRG) is a binding site for NAD(+). K221 is an active-site residue.

Belongs to the mannitol dehydrogenase family. Monomer.

The catalysed reaction is D-mannitol 1-phosphate + NAD(+) = beta-D-fructose 6-phosphate + NADH + H(+). In terms of biological role, catalyzes the NAD(H)-dependent interconversion of D-fructose 6-phosphate and D-mannitol 1-phosphate in the mannitol metabolic pathway. The sequence is that of Mannitol-1-phosphate 5-dehydrogenase from Pyricularia oryzae (strain Y34) (Rice blast fungus).